A 332-amino-acid polypeptide reads, in one-letter code: MRKITVFGMGSFGTALANVLAQNGHDVLMWGKNVENVDELNTHHMNKNYLKDAKLDSSIKATVDLNKAVQFSDIYLMALPTKAIREVSKDIDQLLTSKKTFIHVAKGIENDTFKRVSEMIEDSISSEHNGGIGVLSGPSHAEEVVIKQPTTVAASSKDNNVSKLIQDLFMNDYLRVYTNNDLVGVELGGALKNIIAIASGIVAGMGYGDNAKAALMTRGLAEISRLGEKLGADPMTFLGLGGIGDLIVTCTSTHSRNYTLGFKLGQGKTAEEALKEMKMVVEGIYTTKSVYHLAQQEGVEMPITNALYEVLFEDVPVSKSVRTLMERDKKAE.

Positions 11, 12, 32, and 106 each coordinate NADPH. K106, G137, and S139 together coordinate sn-glycerol 3-phosphate. A141 is a binding site for NADPH. Residues K192, D245, S255, R256, and N257 each contribute to the sn-glycerol 3-phosphate site. K192 functions as the Proton acceptor in the catalytic mechanism. R256 contributes to the NADPH binding site. The NADPH site is built by V280 and E282.

It belongs to the NAD-dependent glycerol-3-phosphate dehydrogenase family.

The protein localises to the cytoplasm. It carries out the reaction sn-glycerol 3-phosphate + NAD(+) = dihydroxyacetone phosphate + NADH + H(+). The catalysed reaction is sn-glycerol 3-phosphate + NADP(+) = dihydroxyacetone phosphate + NADPH + H(+). Its pathway is membrane lipid metabolism; glycerophospholipid metabolism. In terms of biological role, catalyzes the reduction of the glycolytic intermediate dihydroxyacetone phosphate (DHAP) to sn-glycerol 3-phosphate (G3P), the key precursor for phospholipid synthesis. In Staphylococcus epidermidis (strain ATCC 35984 / DSM 28319 / BCRC 17069 / CCUG 31568 / BM 3577 / RP62A), this protein is Glycerol-3-phosphate dehydrogenase [NAD(P)+].